Reading from the N-terminus, the 249-residue chain is 2,3,4,5-tetrahydropyridine-2,6-dicarboxylate N-acetyltransferase (249 aa).

Belongs to the transferase hexapeptide repeat family. DapH subfamily.

The catalysed reaction is (S)-2,3,4,5-tetrahydrodipicolinate + acetyl-CoA + H2O = L-2-acetamido-6-oxoheptanedioate + CoA. The protein operates within amino-acid biosynthesis; L-lysine biosynthesis via DAP pathway; LL-2,6-diaminopimelate from (S)-tetrahydrodipicolinate (acetylase route): step 1/3. Functionally, catalyzes the transfer of an acetyl group from acetyl-CoA to tetrahydrodipicolinate. This Fervidobacterium nodosum (strain ATCC 35602 / DSM 5306 / Rt17-B1) protein is 2,3,4,5-tetrahydropyridine-2,6-dicarboxylate N-acetyltransferase.